Consider the following 272-residue polypeptide: Eukaryotic translation initiation factor 3 subunit G (272 aa).

Disordered regions lie at residues 1-28 (MPALDEIKSSWADEVELDSGSLPPPTEI) and 157-188 (APTTAKSGKYVPPSMRDSQKPGMGGNPRGRDD). One can recognise an RRM domain in the interval 190–268 (TAIRISNLSE…LILNVEWSKP (79 aa)).

This sequence belongs to the eIF-3 subunit G family. As to quaternary structure, component of the eukaryotic translation initiation factor 3 (eIF-3) complex.

It is found in the cytoplasm. Functionally, RNA-binding component of the eukaryotic translation initiation factor 3 (eIF-3) complex, which is involved in protein synthesis of a specialized repertoire of mRNAs and, together with other initiation factors, stimulates binding of mRNA and methionyl-tRNAi to the 40S ribosome. The eIF-3 complex specifically targets and initiates translation of a subset of mRNAs involved in cell proliferation. This subunit can bind 18S rRNA. This is Eukaryotic translation initiation factor 3 subunit G from Aedes aegypti (Yellowfever mosquito).